Consider the following 143-residue polypeptide: MSQPFWQVKTLDQMTDEEWESLCDGCGQCCLHKLMDDDTDEIYFTNVACNQLNIKTCQCKNYEDRFRYEPDCIKLTRYNLPTFAWLPITCAYRLLEEGKPLLPWHPLIKGSKSAMHSERISVRHIAVREIDVVEWEDHIINKP.

This sequence belongs to the UPF0260 family.

This chain is UPF0260 protein plu2141, found in Photorhabdus laumondii subsp. laumondii (strain DSM 15139 / CIP 105565 / TT01) (Photorhabdus luminescens subsp. laumondii).